A 178-amino-acid chain; its full sequence is Large ribosomal subunit protein uL6 (178 aa).

The protein belongs to the universal ribosomal protein uL6 family. In terms of assembly, part of the 50S ribosomal subunit.

This protein binds to the 23S rRNA, and is important in its secondary structure. It is located near the subunit interface in the base of the L7/L12 stalk, and near the tRNA binding site of the peptidyltransferase center. The sequence is that of Large ribosomal subunit protein uL6 from Helicobacter pylori (strain Shi470).